The chain runs to 366 residues: Probable cinnamyl alcohol dehydrogenase 3 (366 aa).

Cys53 is a binding site for Zn(2+). Ser55 provides a ligand contact to NADP(+). Zn(2+) is bound by residues His75, Glu76, Cys106, Cys109, Cys112, Cys120, and Cys169. Residues Thr173, 194 to 199 (GLGGLG), 217 to 222 (SSSPGK), Thr257, Gly281, and 304 to 306 (SNI) contribute to the NADP(+) site.

Belongs to the zinc-containing alcohol dehydrogenase family. As to quaternary structure, homodimer. Requires Zn(2+) as cofactor.

The enzyme catalyses (E)-cinnamyl alcohol + NADP(+) = (E)-cinnamaldehyde + NADPH + H(+). It carries out the reaction (E)-coniferol + NADP(+) = (E)-coniferaldehyde + NADPH + H(+). It catalyses the reaction (E)-sinapyl alcohol + NADP(+) = (E)-sinapaldehyde + NADPH + H(+). The catalysed reaction is (E)-4-coumaroyl alcohol + NADP(+) = (E)-4-coumaraldehyde + NADPH + H(+). The enzyme catalyses (E)-caffeyl alcohol + NADP(+) = (E)-caffeyl aldehyde + NADPH + H(+). It participates in aromatic compound metabolism; phenylpropanoid biosynthesis. Functionally, involved in lignin biosynthesis. Catalyzes the final step specific for the production of lignin monomers. Catalyzes the NADPH-dependent reduction of coniferaldehyde, 5-hydroxyconiferaldehyde, sinapaldehyde, 4-coumaraldehyde and caffeyl aldehyde to their respective alcohols. The protein is Probable cinnamyl alcohol dehydrogenase 3 of Oryza sativa subsp. japonica (Rice).